A 223-amino-acid polypeptide reads, in one-letter code: Fibronectin type III domain-containing protein 10 (223 aa).

Residues 1–19 (MRAPPLLLLLAACAPPSGA) form the signal peptide. Residues 20–179 (AVDPTPPGWE…FTAEPAAMQE (160 aa)) are Extracellular-facing. One can recognise a Fibronectin type-III domain in the interval 72–168 (LASAGGSLRA…VVPPELAECV (97 aa)). Residues N86 and N109 are each glycosylated (N-linked (GlcNAc...) asparagine). The chain crosses the membrane as a helical span at residues 180–200 (IVVAMTAVGGSICVMLVVICL). Over 201-223 (LVAYITENLMHPTFRRPSLRRQP) the chain is Cytoplasmic.

The protein localises to the membrane. This is Fibronectin type III domain-containing protein 10 (Fndc10) from Mus musculus (Mouse).